The following is a 206-amino-acid chain: Ras-related protein RABH1a (206 aa).

14-21 (GDQGVGKT) lines the GTP pocket. The Effector region signature appears at 36–44 (YQATIGIDF). Residues 62–66 (DTAGQ), 120–123 (NKTD), and 150–151 (SA) each bind GTP. S-geranylgeranyl cysteine attachment occurs at residues Cys204 and Cys206. Cys206 carries the cysteine methyl ester modification.

This sequence belongs to the small GTPase superfamily. Rab family.

It localises to the golgi apparatus membrane. Its function is as follows. Protein transport. Regulator of membrane traffic from the Golgi apparatus towards the endoplasmic reticulum (ER). The polypeptide is Ras-related protein RABH1a (RABH1A) (Arabidopsis thaliana (Mouse-ear cress)).